The chain runs to 700 residues: Acetyl-coenzyme A carboxylase carboxyl transferase subunit beta, chloroplastic (700 aa).

Zn(2+)-binding residues include cysteine 34, cysteine 37, cysteine 53, and cysteine 56. The C4-type zinc finger occupies 34–56 (CENCETLIYKKSLLEQKGVCAEC). The 256-residue stretch at 445–700 (KKGRDTKDTE…ETIEIYMYGD (256 aa)) folds into the CoA carboxyltransferase N-terminal domain.

Belongs to the AccD/PCCB family. In terms of assembly, acetyl-CoA carboxylase is a heterohexamer composed of biotin carboxyl carrier protein, biotin carboxylase and 2 subunits each of ACCase subunit alpha and ACCase plastid-coded subunit beta (accD). It depends on Zn(2+) as a cofactor.

The protein resides in the plastid. Its subcellular location is the chloroplast stroma. It catalyses the reaction N(6)-carboxybiotinyl-L-lysyl-[protein] + acetyl-CoA = N(6)-biotinyl-L-lysyl-[protein] + malonyl-CoA. Its pathway is lipid metabolism; malonyl-CoA biosynthesis; malonyl-CoA from acetyl-CoA: step 1/1. In terms of biological role, component of the acetyl coenzyme A carboxylase (ACC) complex. Biotin carboxylase (BC) catalyzes the carboxylation of biotin on its carrier protein (BCCP) and then the CO(2) group is transferred by the transcarboxylase to acetyl-CoA to form malonyl-CoA. The polypeptide is Acetyl-coenzyme A carboxylase carboxyl transferase subunit beta, chloroplastic (Cryptomeria japonica (Japanese cedar)).